A 901-amino-acid chain; its full sequence is MLIKLLTKVFGSRNDRTLRRMRKVVNIINAMEPEIEKLSDEELKGKTAEFRARLEKGEVLENLIPEAFAVVREASKRVFGMRHFDVQLLGGMVLNERCIAEMRTGEGKTLTATLPAYLNALTGKGVHVVTVNDYLAQRDAENNRPLFEFLGLTVGINLPGMPAPAKREAYAADITYGTNNEYGFDYLRDNMAFSPEERVQRKLHYALVDEVDSILIDEARTPLIISGPAEDSSEMYKRVNKIIPHLIRQEKEDSETFQGEGHFSVDEKSRQVNLTERGLVLIEELLVKEGIMDEGESLYSPANIMLMHHVTAALRAHALFTRDVDYIVKDGEVIIVDEHTGRTMQGRRWSDGLHQAVEAKEGVQIQNENQTLASITFQNYFRLYEKLAGMTGTADTEAFEFSSIYKLDTVVVPTNRPMIRKDLPDLVYMTEAEKIQAIIEDIKERTAKGQPVLVGTISIEKSELVSNELTKAGIKHNVLNAKFHANEAAIVAQAGYPAAVTIATNMAGRGTDIVLGGSWQAEVAALENPTAEQIEKIKADWQVRHDAVLAAGGLHIIGTERHESRRIDNQLRGRSGRQGDAGSSRFYLSMEDALMRIFASDRVSGMMRKLGMKPGEAIEHPWVTKAIANAQRKVESRNFDIRKQLLEYDDVANDQRRAIYSQRNELLDVSDVSETINSIREDVFKATIDAYIPPQSLEEMWDIPGLQERLKNDFDLDLPIAEWLDKEPELHEETLRERILAQSIEVYQRKEEVVGAEMMRHFEKGVMLQTLDSLWKEHLAAMDYLRQGIHLRGYAQKDPKQEYKRESFSMFAAMLESLKYEVISTLSKVQVRMPEEVEELEQQRRMEAERLAQMQQLSHQDDDSAAAAALAAQTGERKVGRNDPCPCGSGKKYKQCHGRLQ.

ATP-binding positions include Gln87, Gly105–Thr109, and Asp512. The interval His859–Gln901 is disordered. Positions 885, 887, 896, and 897 each coordinate Zn(2+). The span at Lys891–Gln901 shows a compositional bias: basic residues.

The protein belongs to the SecA family. In terms of assembly, monomer and homodimer. Part of the essential Sec protein translocation apparatus which comprises SecA, SecYEG and auxiliary proteins SecDF-YajC and YidC. Zn(2+) is required as a cofactor.

Its subcellular location is the cell inner membrane. It localises to the cytoplasm. The enzyme catalyses ATP + H2O + cellular proteinSide 1 = ADP + phosphate + cellular proteinSide 2.. In terms of biological role, part of the Sec protein translocase complex. Interacts with the SecYEG preprotein conducting channel. Has a central role in coupling the hydrolysis of ATP to the transfer of proteins into and across the cell membrane, serving both as a receptor for the preprotein-SecB complex and as an ATP-driven molecular motor driving the stepwise translocation of polypeptide chains across the membrane. The sequence is that of Protein translocase subunit SecA from Escherichia coli O127:H6 (strain E2348/69 / EPEC).